Here is a 462-residue protein sequence, read N- to C-terminus: Nitrate/nitrite transporter NarU (462 aa).

The Cytoplasmic segment spans residues 1-35 (MTRQNENYNRYLLSDWRPENPAFWENKGKGIARRN). A helical membrane pass occupies residues 36-56 (LWISVSCLLLAFCVWMLFSAV). At 57–71 (AVNLNKIGFNFTTDQ) the chain is on the periplasmic side. A helical transmembrane segment spans residues 72-92 (LFLLTALPSLSGAILRVPYSF). Topologically, residues 93–101 (MVPLFGGRK) are cytoplasmic. The helical transmembrane segment at 102–122 (WTVLSTVILIIPCAWLGFAVQ) threads the bilayer. Residues 123–124 (NP) lie on the Periplasmic side of the membrane. A helical membrane pass occupies residues 125–145 (ATPFGVFMLIALLCGFAGANF). Topologically, residues 146–180 (ASSMGNISFFFPKARQGSALGINGGLGNLGVSVMQ) are cytoplasmic. A helical transmembrane segment spans residues 181–201 (LIAPLVIFLPIFTFLGVQGVP). Over 202–206 (QPDGS) the chain is Periplasmic. Residues 207–227 (LLALTNAAWIWVPLLAVATLA) traverse the membrane as a helical segment. Residues 228 to 258 (AWFGMNDIGSSKASVASQLPVLKRLHLWLLS) are Cytoplasmic-facing. A helical membrane pass occupies residues 259–279 (LLYLATFGSFIGFSAGFAMLA). Over 280–287 (KTQFPDVN) the chain is Periplasmic. A helical membrane pass occupies residues 288–308 (ILQLAFFGPFIGALARSAGGV). The Cytoplasmic portion of the chain corresponds to 309–317 (ISDKFGGVR). Residues 318 to 338 (VTLINFIFMALFTALLFLTLP) traverse the membrane as a helical segment. The Periplasmic portion of the chain corresponds to 339–341 (GSG). A helical membrane pass occupies residues 342–362 (AGSFSAFYLVFMGLFLTAGLG). At 363 to 401 (SGSTFQMIAVIFRQITLYNVKLRGGSDEQAQREAVTDTA) the chain is on the cytoplasmic side. A helical transmembrane segment spans residues 402–422 (AALGFISAIGAVGGFFIPKAF). Over 423-432 (GTSLALTGSP) the chain is Periplasmic. Residues 433-453 (VGAMKIFLLFYLACVLLTWLV) form a helical membrane-spanning segment. Over 454-462 (YGRRKPKQQ) the chain is Cytoplasmic.

It belongs to the major facilitator superfamily. Nitrate/nitrite porter (TC 2.A.1.8) family.

It localises to the cell inner membrane. Catalyzes nitrate uptake, nitrite uptake and nitrite export across the cytoplasmic membrane. The polypeptide is Nitrate/nitrite transporter NarU (narU) (Salmonella typhimurium (strain LT2 / SGSC1412 / ATCC 700720)).